A 339-amino-acid chain; its full sequence is MFYKIAQKVMFQMDPERAHHLAIGSLKMTANSPLTCLYGQTITPAPVSVMGLTFPNPVGLAAGMDKDGESIDAFHAMGFGHVEVGTVTPRPQPGNDLPRLFRLKPAKGIINRMGFNNKGVDNLVKNLIAKKTDIMVGVNIGKNKDTPVEQGKDDYLICMDKVYLHAAYIAVNISSPNTPGLRSLQYGDLLDELLSAIKTKQLELAEKHKKYVPIALKIAPDLTIEEIENIAQALIKNKFDGAIATNTTLTRDGVSGLANANESGGLSGKPLTELSTKVIKQLAICLKGQIPIIGVGGINSAEDALAKFDAGATMVQIYSGFIYQGPKLIKEIVNAYRLK.

Residues 62–66 and T86 contribute to the FMN site; that span reads AGMDK. Residue K66 coordinates substrate. 111–115 contacts substrate; the sequence is NRMGF. FMN contacts are provided by N139 and N172. N172 is a substrate binding site. S175 functions as the Nucleophile in the catalytic mechanism. N177 lines the substrate pocket. The FMN site is built by K217 and T245. Residue 246-247 coordinates substrate; that stretch reads NT. FMN is bound by residues G268, G297, and 318–319; that span reads YS.

It belongs to the dihydroorotate dehydrogenase family. Type 2 subfamily. In terms of assembly, monomer. FMN serves as cofactor.

Its subcellular location is the cell membrane. It catalyses the reaction (S)-dihydroorotate + a quinone = orotate + a quinol. The protein operates within pyrimidine metabolism; UMP biosynthesis via de novo pathway; orotate from (S)-dihydroorotate (quinone route): step 1/1. Its function is as follows. Catalyzes the conversion of dihydroorotate to orotate with quinone as electron acceptor. This Shewanella baltica (strain OS223) protein is Dihydroorotate dehydrogenase (quinone).